A 224-amino-acid chain; its full sequence is Peroxiredoxin-6 (224 aa).

In terms of domain architecture, Thioredoxin spans 5-169; sequence LLLGDEAPNF…ILRVVDSLQL (165 aa). A required and sufficient for targeting to lysosomes and lamellar bodies region spans residues 31–40; sequence DSWGILFSHP. Phosphothreonine is present on threonine 44. Cysteine 47 functions as the Cysteine sulfenic acid (-SOH) intermediate; for peroxidase activity in the catalytic mechanism. Position 63 is an N6-acetyllysine (lysine 63). The residue at position 89 (tyrosine 89) is a Phosphotyrosine. Residue threonine 93 is modified to Phosphothreonine. Aspartate 140 (for phospholipase activity) is an active-site residue. Residue threonine 177 is modified to Phosphothreonine; by MAPK. An N6-acetyllysine; alternate modification is found at lysine 209. Residue lysine 209 is modified to N6-succinyllysine; alternate.

Belongs to the peroxiredoxin family. Prx6 subfamily. Homodimer. Interacts with GSTP1; mediates PRDX6 glutathionylation and regeneration. Interacts with APEX1. Interacts with STH. May interact with FAM168B. May interact with HTR2A. Irreversibly inactivated by overoxidation of Cys-47 to sulfinic acid (Cys-SO(2)H) and sulfonic acid (Cys-SO(3)H) forms upon oxidative stress. In terms of processing, phosphorylation at Thr-177 by MAP kinases increases the phospholipase activity of the enzyme. The phosphorylated form exhibits a greater lysophosphatidylcholine acyltransferase activity compared to the non-phosphorylated form. As to expression, highly expressed in heart, kidney and liver. Moderate expression in brain and stomach. Very low levels in intestine.

It localises to the cytoplasm. It is found in the lysosome. The enzyme catalyses a hydroperoxide + 2 glutathione = an alcohol + glutathione disulfide + H2O. It catalyses the reaction a 1,2-diacyl-sn-glycero-3-phosphocholine + H2O = a 1-acyl-sn-glycero-3-phosphocholine + a fatty acid + H(+). The catalysed reaction is a 1-acyl-sn-glycero-3-phosphocholine + an acyl-CoA = a 1,2-diacyl-sn-glycero-3-phosphocholine + CoA. It carries out the reaction 1-hexadecanoyl-sn-glycero-3-phosphocholine + hexadecanoyl-CoA = 1,2-dihexadecanoyl-sn-glycero-3-phosphocholine + CoA. The enzyme catalyses 1,2-dihexadecanoyl-sn-glycero-3-phosphocholine + H2O = 1-hexadecanoyl-sn-glycero-3-phosphocholine + hexadecanoate + H(+). MJ33 or lithium;[(2R)-1-hexadecoxy-3-(2,2,2-trifluoroethoxy)propan-2-yl] methyl phosphate inhibits its phospholipase A2 activity. CI-976 or 2,2-Dimethyl-N-(2,4,6-trimethoxyphenyl)dodecanamide inhibits its lysophosphatidylcholine acyltransferase activity. Functionally, thiol-specific peroxidase that catalyzes the reduction of hydrogen peroxide and organic hydroperoxides to water and alcohols, respectively. Can reduce H(2)O(2) and short chain organic, fatty acid, and phospholipid hydroperoxides. Has phospholipase activity. Can either reduce the oxidized sn-2 fatty acyl group of phospholipids (peroxidase activity) or hydrolyze the sn-2 ester bond of phospholipids (phospholipase activity). These activities are dependent on binding to phospholipids at acidic pH and to oxidized phospholipds at cytosolic pH. Plays a role in cell protection against oxidative stress by detoxifying peroxides and in phospholipid homeostasis. Exhibits acyl-CoA-dependent lysophospholipid acyltransferase which mediates the conversion of lysophosphatidylcholine (1-acyl-sn-glycero-3-phosphocholine or LPC) into phosphatidylcholine (1,2-diacyl-sn-glycero-3-phosphocholine or PC). Shows a clear preference for LPC as the lysophospholipid and for palmitoyl CoA as the fatty acyl substrate. The chain is Peroxiredoxin-6 (Prdx6) from Mus musculus (Mouse).